Consider the following 144-residue polypeptide: Large ribosomal subunit protein uL15 (144 aa).

A disordered region spans residues 1-56 (MELNNLKPAAGAKHAKRRVGRGIGSGLGKTAGRGHKGQKSRSGGFHKVGFEGGQMP). Over residues 21–31 (RGIGSGLGKTA) the composition is skewed to gly residues.

This sequence belongs to the universal ribosomal protein uL15 family. Part of the 50S ribosomal subunit.

Functionally, binds to the 23S rRNA. This is Large ribosomal subunit protein uL15 from Burkholderia ambifaria (strain MC40-6).